Consider the following 206-residue polypeptide: Imidazoleglycerol-phosphate dehydratase (206 aa).

Belongs to the imidazoleglycerol-phosphate dehydratase family.

The protein localises to the cytoplasm. It catalyses the reaction D-erythro-1-(imidazol-4-yl)glycerol 3-phosphate = 3-(imidazol-4-yl)-2-oxopropyl phosphate + H2O. Its pathway is amino-acid biosynthesis; L-histidine biosynthesis; L-histidine from 5-phospho-alpha-D-ribose 1-diphosphate: step 6/9. The polypeptide is Imidazoleglycerol-phosphate dehydratase (Cutibacterium acnes (strain DSM 16379 / KPA171202) (Propionibacterium acnes)).